The chain runs to 154 residues: 20 kDa calcium-binding protein (154 aa).

4 consecutive EF-hand domains span residues 13–48, 49–84, 86–121, and 122–154; these read DQVK…LNLT, VKPD…KLQE, QDER…LGDD, and LTEE…MTSE. Positions 62, 64, 66, 99, 101, 105, 110, 135, 137, 139, and 146 each coordinate Ca(2+).

The protein localises to the tegument membrane. Its function is as follows. Calcium-binding protein. The chain is 20 kDa calcium-binding protein (SM20) from Schistosoma mansoni (Blood fluke).